The sequence spans 199 residues: NAD(P)H dehydrogenase (quinone) 1 (199 aa).

The Flavodoxin-like domain maps to V4–V190. FMN contacts are provided by residues S10–I15 and T78–Y80. Y12 lines the NAD(+) pocket. Position 98 (W98) interacts with substrate. Residues S113–G119 and H134 contribute to the FMN site.

This sequence belongs to the WrbA family. Requires FMN as cofactor.

It catalyses the reaction a quinone + NADH + H(+) = a quinol + NAD(+). It carries out the reaction a quinone + NADPH + H(+) = a quinol + NADP(+). The chain is NAD(P)H dehydrogenase (quinone) 1 from Rhizobium meliloti (strain 1021) (Ensifer meliloti).